Here is a 365-residue protein sequence, read N- to C-terminus: Outer capsid protein sigma-3 (365 aa).

Residues 51–73 (CMHCLGVVGSLQRKLKHLPHHRC) form a CCHC-type zinc finger.

The protein belongs to the orthoreovirus sigma-3 protein family. In terms of assembly, heterohexamer of three sigma-3 and three Mu-1 proteins. The RNA-binding form is probably a homodimer. Cleaved during virus the endosomal proteolytic disassembly of the outer capsid.

The protein localises to the virion. It is found in the host cytoplasm. Its subcellular location is the host nucleus. In terms of biological role, stimulates translation by blocking the activation of the dsRNA-dependent protein kinase EIF2AK2/PKR, thereby inhibiting the host interferon response. Sigma3 prevents the activation of EIF2AK2 by competing with the kinase for dsRNA-binding. Functionally, the viral outer shell polypeptides, of which sigma-3 is one, impose structural constraints that prevent elongation of nascent transcripts by the RNA-dependent RNA polymerase lambda-3. In Reovirus type 3 (strain Dearing) (T3D), this protein is Outer capsid protein sigma-3 (S4).